Here is a 219-residue protein sequence, read N- to C-terminus: Transmembrane protein 125 (219 aa).

4 helical membrane passes run 36 to 56 (LCFVVAVGLVAGCGAGGVALL), 68 to 88 (LATGTVLCLLALLVLVKQLMS), 114 to 134 (ALVVLLSGLVLLVTGLTLAGL), and 147 to 167 (MLSVGIALAALGSLLLLGLLL).

It localises to the membrane. The protein is Transmembrane protein 125 (TMEM125) of Homo sapiens (Human).